Here is a 529-residue protein sequence, read N- to C-terminus: MQQRRPIRRALLSVSDKAGIVEFAQALSHRGVELLSTGGTARLLADAGLAVTEVSDYTGFPEMMDGRVKTLHPKVHGGILGRRDQDDAIMAQHDIKPIDIVVVNLYPFAQTVARENCTLEDAVENIDIGGPTMVRSAAKNHKDVAIVVKSSDYSAIINEIDANEGSLTYETRFDLAIKAFEHTAAYDSMIANYFGALVPPYHGETDKPSGNFPRTLNLNYIKKQDMRYGENSHQQAAFYIEENIHEASVATSTQLQGKALSYNNIADTDAALECVKEFAEPACVIVKHANPSGVAIGGSILDAYERAYKTDPTSAFGGIIAFNRELDEETAQAIISRQFVEVIIAPSASEAALKVTAAKQNVRVLTSGNWQQRVPGLDFKRVNGGLLIQDRDLGMVDASQLRVVTERQPSEQELRDALFCWKVAKFVKSNAIVYARDNMTIGIGAGQMSRVYSAKIAGIKAGDEGLEVKGSAMASDAFFPFRDGIDAAAAVGITCVIQPGGSIRDDEVIAAANEHGIAMIFTDMRHFRH.

The 148-residue stretch at 1–148 (MQQRRPIRRA…KNHKDVAIVV (148 aa)) folds into the MGS-like domain.

The protein belongs to the PurH family.

The enzyme catalyses (6R)-10-formyltetrahydrofolate + 5-amino-1-(5-phospho-beta-D-ribosyl)imidazole-4-carboxamide = 5-formamido-1-(5-phospho-D-ribosyl)imidazole-4-carboxamide + (6S)-5,6,7,8-tetrahydrofolate. It catalyses the reaction IMP + H2O = 5-formamido-1-(5-phospho-D-ribosyl)imidazole-4-carboxamide. The protein operates within purine metabolism; IMP biosynthesis via de novo pathway; 5-formamido-1-(5-phospho-D-ribosyl)imidazole-4-carboxamide from 5-amino-1-(5-phospho-D-ribosyl)imidazole-4-carboxamide (10-formyl THF route): step 1/1. It functions in the pathway purine metabolism; IMP biosynthesis via de novo pathway; IMP from 5-formamido-1-(5-phospho-D-ribosyl)imidazole-4-carboxamide: step 1/1. The chain is Bifunctional purine biosynthesis protein PurH from Pectobacterium carotovorum subsp. carotovorum (strain PC1).